Here is a 224-residue protein sequence, read N- to C-terminus: Protein FAM3D (224 aa).

The first 25 residues, 1–25 (MRVSGVLRLLALIFAIVTTWMFIRS), serve as a signal peptide directing secretion. Disulfide bonds link Cys55/Cys83 and Cys61/Cys218. One can recognise a GG-type lectin domain in the interval 64–222 (NYFAFKICSG…LEMEGCMPPK (159 aa)). A glycan (N-linked (GlcNAc...) asparagine) is linked at Asn107.

It belongs to the FAM3 family. In terms of tissue distribution, abundantly expressed in placenta and weakly expressed in small intestine.

It is found in the secreted. This chain is Protein FAM3D (FAM3D), found in Homo sapiens (Human).